The primary structure comprises 578 residues: Vesicular acetylcholine transporter (578 aa).

The Cytoplasmic segment spans residues methionine 1 to arginine 32. The helical transmembrane segment at leucine 33–valine 53 threads the bilayer. The Lumenal, vesicle portion of the chain corresponds to proline 54 to glycine 98. Asparagine 78 carries N-linked (GlcNAc...) asparagine glycosylation. A helical transmembrane segment spans residues isoleucine 99–isoleucine 119. At aspartate 120–aspartate 125 the chain is on the cytoplasmic side. Residues leucine 126 to serine 146 form a helical membrane-spanning segment. Residues serine 147 to alanine 154 lie on the Lumenal, vesicle side of the membrane. A helical membrane pass occupies residues arginine 155–aspartate 175. The Cytoplasmic portion of the chain corresponds to arginine 176–leucine 187. Residues glycine 188–leucine 208 form a helical membrane-spanning segment. At tyrosine 209–glutamate 215 the chain is on the lumenal, vesicle side. Residues valine 216–methionine 236 form a helical membrane-spanning segment. Over lysine 237–proline 263 the chain is Cytoplasmic. A helical transmembrane segment spans residues tyrosine 264–proline 284. Residues threonine 285–tryptophan 299 are Lumenal, vesicle-facing. Asparagine 293 carries N-linked (GlcNAc...) asparagine glycosylation. A helical transmembrane segment spans residues lysine 300 to valine 320. The Cytoplasmic portion of the chain corresponds to lysine 321–glutamine 330. The helical transmembrane segment at tryptophan 331 to cysteine 351 threads the bilayer. Residues serine 352–lysine 355 are Lumenal, vesicle-facing. A helical transmembrane segment spans residues methionine 356–leucine 376. Topologically, residues proline 377–tyrosine 387 are cytoplasmic. The helical transmembrane segment at valine 388–valine 408 threads the bilayer. Residues glycine 409–alanine 413 lie on the Lumenal, vesicle side of the membrane. A helical membrane pass occupies residues glycine 414–leucine 434. Residues alanine 435–phenylalanine 578 lie on the Cytoplasmic side of the membrane. Composition is skewed to low complexity over residues glutamate 507–glycine 534 and glutamine 549–glutamine 563. The segment at glutamate 507–phenylalanine 578 is disordered.

It belongs to the major facilitator superfamily. Vesicular transporter family.

It is found in the membrane. Its function is as follows. Involved in acetylcholine transport into synaptic vesicles. In Drosophila melanogaster (Fruit fly), this protein is Vesicular acetylcholine transporter (VAChT).